The following is a 152-amino-acid chain: Endoribonuclease YbeY (152 aa).

Zn(2+) is bound by residues histidine 113, histidine 117, and histidine 123.

This sequence belongs to the endoribonuclease YbeY family. The cofactor is Zn(2+).

The protein resides in the cytoplasm. Single strand-specific metallo-endoribonuclease involved in late-stage 70S ribosome quality control and in maturation of the 3' terminus of the 16S rRNA. The polypeptide is Endoribonuclease YbeY (Acidovorax ebreus (strain TPSY) (Diaphorobacter sp. (strain TPSY))).